The sequence spans 553 residues: MTVQTFYLIGEKERSTRELDVGDPKTVNALRQGLAEVFNILSAEGIDFHDCHGPISTIESILRSESVGITVNGHPVRYPQQPQGIPIFGNHFEIYPDHLGNHERLFNKYGSVIRTNNMGRVTYLTNDPDIAALAFRDNDYFTKAPSSASHPLYGIRDQTALFLCDTESPAWKEAHKFIPPSMTPRAVRHYTPLLQQSVDTVFNVLDKFDNNGQAFNVYHLTAKLASQVICQLVLGVDLHHFDAVDSPVHPIIVLLQRYLTLNRRVQTKGAWYSYLPFGDPVALKNTRRELYGLIEEAVITCQKKNGGTTGDLPIQTAALHATCLVDYLARATDEHGNKLRHEYILSNTLALVGAGFVTSSAFLSWLIYSLVEYPGQQDRLLQELVDHGAVSDKRWTYDEIQALPFLDAFVKEAQRMHSPSFQPARNVKKDIILPGGWALPQGSILIPSIPHLHHHTAYWENPDRFDPDRWRTEKVKNRHRSVYVPFAAGPRSCIGFNVALQEVKISLAELVYRYEFVNATNEGIEYDPDFIVIRPVNFYVRAIRRTEWPARSP.

The chain crosses the membrane as a helical span at residues 351–371 (LVGAGFVTSSAFLSWLIYSLV). A heme-binding site is contributed by C493. N-linked (GlcNAc...) asparagine glycosylation occurs at N518.

Belongs to the cytochrome P450 family. Heme is required as a cofactor.

Its subcellular location is the membrane. Its pathway is polyketide biosynthesis. Functionally, cytochrome P450 monooxygenase; part of the gene cluster that mediates the biosynthesis of asperlin, a polyketide showing anti-inflammatory, antitumor and antibiotic activities. The first step of the asperlin biosynthesis is the production of the intermediate 2,4,6-octatrienoic acid by the highly redusing polyketide synthase alnA with cleavage of the PKS product by the esterase alnB. 2,4,6-octatrienoic acid is further converted to asperlin via several steps involving the remaining enzymes from the cluster. This Emericella nidulans (strain FGSC A4 / ATCC 38163 / CBS 112.46 / NRRL 194 / M139) (Aspergillus nidulans) protein is Cytochrome P450 monooxygenase alnD.